The sequence spans 348 residues: Delta(6)-protoilludene synthase 18 (348 aa).

Mg(2+) is bound by residues aspartate 87, asparagine 223, serine 227, and glutamate 231. The DDXXD motif motif lies at 87-91; it reads DEYTD. Positions 223 to 231 match the NSE/DTE motif motif; that stretch reads NDLVSYNRE. Residues arginine 311 and tyrosine 312 each coordinate (2E,6E)-farnesyl diphosphate.

This sequence belongs to the terpene synthase family. Mg(2+) is required as a cofactor.

It carries out the reaction (2E,6E)-farnesyl diphosphate = Delta(6)-protoilludene + diphosphate. Functionally, terpene cyclase that catalyzes the cyclization of farnesyl diphosphate (FPP) to delta(6)-protoilludene. This Postia placenta (strain ATCC 44394 / Madison 698-R) (Brown rot fungus) protein is Delta(6)-protoilludene synthase 18.